Reading from the N-terminus, the 156-residue chain is Low molecular weight phosphotyrosine protein phosphatase (156 aa).

Cys-11 (nucleophile) is an active-site residue. Residue Arg-17 is part of the active site. The active-site Proton donor is the Asp-128.

The protein belongs to the low molecular weight phosphotyrosine protein phosphatase family.

Its subcellular location is the cytoplasm. The catalysed reaction is O-phospho-L-tyrosyl-[protein] + H2O = L-tyrosyl-[protein] + phosphate. It carries out the reaction a phosphate monoester + H2O = an alcohol + phosphate. Functionally, may contribute to dephosphorylation of 'Tyr-15' of cdc2. The sequence is that of Low molecular weight phosphotyrosine protein phosphatase (stp1) from Schizosaccharomyces pombe (strain 972 / ATCC 24843) (Fission yeast).